The following is a 112-amino-acid chain: Gastrula zinc finger protein XlCGF16.1 (112 aa).

4 consecutive C2H2-type zinc fingers follow at residues 6-28 (YNCSECHKRFRSKSGFVKHQKTH), 34-56 (FVCFVCEQRFVCHSALIGHQRIH), 62-84 (FSCTECGKCFSRRSHLNSHHKTH), and 90-112 (FLCFACGKCFASRSHLTAHHRTH).

It belongs to the krueppel C2H2-type zinc-finger protein family.

Its subcellular location is the nucleus. May be involved in transcriptional regulation. The polypeptide is Gastrula zinc finger protein XlCGF16.1 (Xenopus laevis (African clawed frog)).